The following is a 374-amino-acid chain: MISQINNEERDYKLEAYDYLLDPSLIASKPSAIRHESRLMIVRNSFLEEDCLTNKFTKNLLDEFREGDLVIVNNTKVMKARLKVELENKTLVELLVLERSHECIWLCLAKPAKKLKINRKLKLKSPLAQDINLIVDGVDEETGGRFIKFPENITCLNSMNELLDKYGEIPLPPYIKNSEEESFHEKSYQTEYATNPGAVAAPTAGLHLSKSLISNLKKKGVIILPITLHVGYGTFKPIDQEDLSNLKLHKEWVSVNKEVVEEIKRIKKTDRKIIAIGTTSVRALESCYSHEINDFIPIAKYVDLVIKPGYEFKVVDGLLTNFHLPKSSLLLLVSAMIGRERLLDLYKKAIKEKFRFFSYGDAMYISPDSLLEKK.

This sequence belongs to the QueA family. In terms of assembly, monomer.

The protein localises to the cytoplasm. It catalyses the reaction 7-aminomethyl-7-carbaguanosine(34) in tRNA + S-adenosyl-L-methionine = epoxyqueuosine(34) in tRNA + adenine + L-methionine + 2 H(+). It functions in the pathway tRNA modification; tRNA-queuosine biosynthesis. In terms of biological role, transfers and isomerizes the ribose moiety from AdoMet to the 7-aminomethyl group of 7-deazaguanine (preQ1-tRNA) to give epoxyqueuosine (oQ-tRNA). The polypeptide is S-adenosylmethionine:tRNA ribosyltransferase-isomerase (Prochlorococcus marinus (strain MIT 9301)).